A 440-amino-acid polypeptide reads, in one-letter code: Chromosomal replication initiator protein DnaA (440 aa).

Residues 1 to 74 form a domain I, interacts with DnaA modulators region; it reads MNPSQILENL…VQSGNKAIIN (74 aa). Residues 74–99 form a domain II region; it reads NIQAQSAKQSNKSTKIDIAHIKAQST. A domain III, AAA+ region region spans residues 100–316; sequence ILNPSFTFES…GIIISLNAYA (217 aa). Residues G146, G148, K149, and T150 each coordinate ATP. Residues 317-440 are domain IV, binds dsDNA; that stretch reads TILGQEITLE…KNKILVKSQS (124 aa).

This sequence belongs to the DnaA family. As to quaternary structure, oligomerizes as a right-handed, spiral filament on DNA at oriC.

The protein localises to the cytoplasm. Plays an essential role in the initiation and regulation of chromosomal replication. ATP-DnaA binds to the origin of replication (oriC) to initiate formation of the DNA replication initiation complex once per cell cycle. Binds the DnaA box (a 9 base pair repeat at the origin) and separates the double-stranded (ds)DNA. Forms a right-handed helical filament on oriC DNA; dsDNA binds to the exterior of the filament while single-stranded (ss)DNA is stabiized in the filament's interior. The ATP-DnaA-oriC complex binds and stabilizes one strand of the AT-rich DNA unwinding element (DUE), permitting loading of DNA polymerase. After initiation quickly degrades to an ADP-DnaA complex that is not apt for DNA replication. Binds acidic phospholipids. The polypeptide is Chromosomal replication initiator protein DnaA (Campylobacter jejuni subsp. jejuni serotype O:2 (strain ATCC 700819 / NCTC 11168)).